A 247-amino-acid chain; its full sequence is Calpain small subunit 2 (247 aa).

Alanine 88, aspartate 91, glutamate 93, aspartate 131, aspartate 133, threonine 135, lysine 137, glutamate 142, aspartate 161, aspartate 163, serine 165, and aspartate 204 together coordinate Ca(2+). EF-hand domains follow at residues 118 to 151 (FSLD…NNIK), 148 to 183 (NNIK…AGFQ), 184 to 212 (LNEQ…ISCL), and 213 to 247 (VRLD…TMYS).

As to quaternary structure, heterodimer of a large (catalytic) and a small (regulatory) subunit.

It is found in the cytoplasm. The protein resides in the cell membrane. Calcium-regulated non-lysosomal thiol-protease which catalyzes limited proteolysis of substrates involved in cytoskeletal remodeling and signal transduction. This small subunit may act as a tissue-specific chaperone of the large subunit, possibly by helping it fold into its correct conformation for activity. In Mus musculus (Mouse), this protein is Calpain small subunit 2 (Capns2).